Here is a 547-residue protein sequence, read N- to C-terminus: Sodium-coupled neutral amino acid transporter 4 (547 aa).

The interval 1-26 is disordered; the sequence is MDPMELRNVNIEPDDESSSGESVPDS. Residues 1–104 are Extracellular-facing; sequence MDPMELRNVN…GLSYAMANTG (104 aa). A Phosphoserine modification is found at serine 49. The chain crosses the membrane as a helical span at residues 105-125; it reads IILFIIMLLAVAILSLYSVHL. Topologically, residues 126-151 are cytoplasmic; that stretch reads LLKTAKEGGSLIYEKLGEKAFGWPGK. A helical transmembrane segment spans residues 152–172; it reads IGAFISITMQNIGAMSSYLFI. Residues 173 to 195 are Extracellular-facing; sequence IKYELPEVIRAFMGLEENTGEWY. A helical transmembrane segment spans residues 196-216; sequence PNGNYLIVFVSLGIILPLSLL. Residues 217-220 lie on the Cytoplasmic side of the membrane; it reads KNLG. A helical transmembrane segment spans residues 221 to 241; sequence YLGYTSGFSLTCMVFFVSVVI. Residues 242 to 332 lie on the Extracellular side of the membrane; it reads YKKFQIPCPL…PKYFVFNSRT (91 aa). A disulfide bridge links cysteine 249 with cysteine 321. Asparagine 260, asparagine 264, and asparagine 276 each carry an N-linked (GlcNAc...) asparagine glycan. The helical transmembrane segment at 333–353 threads the bilayer; it reads AYAIPILAFAFVCHPEVLPIY. At 354 to 369 the chain is on the cytoplasmic side; the sequence is SELKDRSRRKMQTVSN. The helical transmembrane segment at 370–390 threads the bilayer; the sequence is ISITGMLVMYLLAALFGYLTF. Over 391–411 the chain is Extracellular; sequence YGEVEDELLHAYSKVYTFDIP. The helical transmembrane segment at 412 to 432 threads the bilayer; sequence LLMVRLAVLVAVTLTVPIVLF. The Cytoplasmic segment spans residues 433–453; the sequence is PIRTSVTTLLFPKRPFSWIRH. Residues 454 to 474 form a helical membrane-spanning segment; that stretch reads FLIAAVLIALNNVLVILVPTI. Residues 475 to 476 lie on the Extracellular side of the membrane; that stretch reads KY. Residues 477 to 497 form a helical membrane-spanning segment; the sequence is IFGFIGASSATMLIFILPAVF. The Cytoplasmic segment spans residues 498-514; that stretch reads YLKLVKKESFRSPQKVG. The chain crosses the membrane as a helical span at residues 515-535; the sequence is ALIFLVVGIIFMIGSMALIII. Topologically, residues 536–547 are extracellular; the sequence is DWIYDPPNSKHH.

The protein belongs to the amino acid/polyamine transporter 2 family. In terms of processing, the disulfide bond plays an important role in substrate transport, but has no effect on trafficking to the cell surface.

The protein resides in the cell membrane. It localises to the cell projection. Its subcellular location is the microvillus membrane. The catalysed reaction is L-methionine(in) + Na(+)(in) = L-methionine(out) + Na(+)(out). It catalyses the reaction L-asparagine(in) + Na(+)(in) = L-asparagine(out) + Na(+)(out). It carries out the reaction L-threonine(in) + Na(+)(in) = L-threonine(out) + Na(+)(out). The enzyme catalyses L-serine(in) + Na(+)(in) = L-serine(out) + Na(+)(out). The catalysed reaction is glycine(in) + Na(+)(in) = glycine(out) + Na(+)(out). It catalyses the reaction L-alanine(in) + Na(+)(in) = L-alanine(out) + Na(+)(out). It carries out the reaction L-glutamine(in) + Na(+)(in) = L-glutamine(out) + Na(+)(out). The enzyme catalyses L-histidine(in) + Na(+)(in) = L-histidine(out) + Na(+)(out). The catalysed reaction is L-cysteine(in) + Na(+)(in) = L-cysteine(out) + Na(+)(out). It catalyses the reaction L-proline(in) + Na(+)(in) = L-proline(out) + Na(+)(out). Its function is as follows. Symporter that cotransports neutral amino acids and sodium ions from the extraccellular to the intracellular side of the cell membrane. The transport is electrogenic, pH dependent and partially tolerates substitution of Na(+) by Li(+). Preferentially transports smaller amino acids, such as glycine, L-alanine, L-serine, L-asparagine and L-threonine, followed by L-cysteine, L-histidine, L-proline and L-glutamine and L-methionine. This Pongo abelii (Sumatran orangutan) protein is Sodium-coupled neutral amino acid transporter 4.